The sequence spans 64 residues: Leader peptide SpeFL (64 aa).

An Ornithine recognition loop motif is present at residues 32 to 38 (HIRRTRH). Arg35 is an L-ornithine binding site.

Belongs to the speF operon leader peptide family. In terms of assembly, binds ornithine in stalled 70S ribosomes, blocking the upper two-thirds of the exit tunnel. Contacts 23S rRNA and ribosomal proteins L4 and L22.

Functionally, a small protein (arrest peptide) encoded upstream of inducible ornithine carboxylase gene (speF) that controls expression of downstream genes (usually speF and potE) by transcriptional and translational attenuation. The sequence is that of Leader peptide SpeFL from Haemophilus influenzae (strain ATCC 51907 / DSM 11121 / KW20 / Rd).